Reading from the N-terminus, the 156-residue chain is Transcriptional repressor NrdR (156 aa).

Residues 3-34 fold into a zinc finger; the sequence is CPYCGHLDNKVIDSRINKDATITRRRRSCLAC. An ATP-cone domain is found at 49 to 139; the sequence is PMLVKKDGRR…VYRQFKDVDE (91 aa).

This sequence belongs to the NrdR family. Zn(2+) serves as cofactor.

Functionally, negatively regulates transcription of bacterial ribonucleotide reductase nrd genes and operons by binding to NrdR-boxes. The polypeptide is Transcriptional repressor NrdR (Desulfotalea psychrophila (strain LSv54 / DSM 12343)).